The following is a 236-amino-acid chain: MICOS complex subunit MIC25 (236 aa).

Positions 1–11 are enriched in basic and acidic residues; that stretch reads MGSAESREGRR. The tract at residues 1 to 22 is disordered; sequence MGSAESREGRRASFGMDEEERV. The N-myristoyl glycine moiety is linked to residue G2. S13 and S31 each carry phosphoserine. Disordered stretches follow at residues 34 to 86 and 109 to 132; these read VVNR…VQVD and EREA…DQEK. A compositionally biased stretch (low complexity) spans 48–58; it reads GLLAPPAAALG. 2 stretches are compositionally biased toward basic and acidic residues: residues 62 to 71 and 122 to 132; these read GREKDSKPPR and RRGEGGVDQEK. A coiled-coil region spans residues 127–167; the sequence is GVDQEKQRLAQRARELESQEEELRCRDAFYKEQLGRLERQN. Residues 195-236 enclose the CHCH domain; it reads EPVCSGLQAQILRCYRDRLQEVLLCADLVRAYQHCVSSAHKG. 2 short sequence motifs (cx9C motif) span residues 198-208 and 219-229; these read CSGLQAQILRC and CADLVRAYQHC. 2 cysteine pairs are disulfide-bonded: C198–C229 and C208–C219.

This sequence belongs to the MICOS complex subunit Mic19 family. Metazoan Mic25 subfamily. As to quaternary structure, component of the mitochondrial contact site and cristae organizing system (MICOS) complex, composed of at least MICOS10/MIC10, CHCHD3/MIC19, CHCHD6/MIC25, APOOL/MIC27, IMMT/MIC60, APOO/MIC23/MIC26 and MICOS13/MIC13. This complex was also known under the names MINOS or MitOS complex. The MICOS complex associates with mitochondrial outer membrane proteins SAMM50, MTX1 and MTX2 (together described as components of the mitochondrial outer membrane sorting assembly machinery (SAM) complex) and DNAJC11, mitochondrial inner membrane protein TMEM11 and with HSPA9. The MICOS and SAM complexes together with DNAJC11 are part of a large protein complex spanning both membranes termed the mitochondrial intermembrane space bridging (MIB) complex. Interacts with DISC1. Interacts with IMMT/MIC60.

It localises to the mitochondrion inner membrane. The protein localises to the mitochondrion. Component of the MICOS complex, a large protein complex of the mitochondrial inner membrane that plays crucial roles in the maintenance of crista junctions, inner membrane architecture, and formation of contact sites to the outer membrane. The sequence is that of MICOS complex subunit MIC25 (CHCHD6) from Bos taurus (Bovine).